A 1383-amino-acid polypeptide reads, in one-letter code: Putative autophagy-related protein 11 (1383 aa).

2 coiled-coil regions span residues 16-49 and 117-324; these read DKNN…YELN and NLFL…QNKE. Composition is skewed to basic and acidic residues over residues 1151 to 1224 and 1233 to 1249; these read EEEK…EDRK and HSSD…KTKE. Positions 1151–1249 are disordered; that stretch reads EEEKKKNEEE…KYNKKEKTKE (99 aa).

The protein belongs to the ATG11 family.

In terms of biological role, involved in cytoplasm to vacuole transport (Cvt), pexophagy, mitophagy and nucleophagy. Works as scaffold proteins that recruit ATG proteins to the pre-autophagosome (PAS), the site of vesicle/autophagosome formation. The chain is Putative autophagy-related protein 11 from Plasmodium falciparum (isolate 3D7).